Here is a 1249-residue protein sequence, read N- to C-terminus: Protein transport protein Sec31A (1249 aa).

WD repeat units follow at residues 4-47, 64-111, 120-160, 166-206, 209-254, 258-298, and 301-342; these read KEID…EIFE, SSSH…AGDK, KHTG…TPMT, QPPE…PIIK, DHSN…SPLR, NHAR…VLYE, and TNTQ…DGLR. The tract at residues 161–470 is interaction with SEC13; sequence PGAKTQPPED…IDASQTDFEK (310 aa). Residues 397–429 form a WD 8; interaction with SEC13 repeat; the sequence is SFSFGGKLVTFENVTGQPQQGAEQPRRQPVFIS. At Arg-423 the chain carries Asymmetric dimethylarginine. 2 positions are modified to phosphoserine: Ser-526 and Ser-531. Lys-647 is covalently cross-linked (Glycyl lysine isopeptide (Lys-Gly) (interchain with G-Cter in ubiquitin)). 3 disordered regions span residues 790–829, 842–940, and 954–1123; these read QGRS…VQSQ, TTWS…RYPN, and PHMY…PIGN. Residues 796–805 show a composition bias toward polar residues; it reads GQESSRSSYE. A Phosphoserine modification is found at Ser-799. Residues 800–1142 are interaction with PDCD6; it reads SRSSYEGQPL…TEKITKKPIP (343 aa). Residues 873-879 carry the ALG-2-binding site motif-2 (ABS-2) motif; it reads GFIMHGN. A compositionally biased stretch (pro residues) spans 898–908; it reads QPPPYPQPQPY. 2 stretches are compositionally biased toward low complexity: residues 961–970 and 991–1007; these read PASSPTSSSA and PSSS…GTPP. The segment covering 1013 to 1024 has biased composition (polar residues); sequence PASQRTGPQNGW. Over residues 1056 to 1074 the composition is skewed to low complexity; the sequence is PGGDPQPQGLQQQPSASGP. Thr-1190 carries the phosphothreonine modification. Ser-1192 is modified (phosphoserine). Lys-1246 participates in a covalent cross-link: Glycyl lysine isopeptide (Lys-Gly) (interchain with G-Cter in ubiquitin).

This sequence belongs to the WD repeat SEC31 family. As to quaternary structure, COPII is composed of at least 5 proteins: the SEC23/24 complex, the SEC13/31 complex and SAR1. SEC13 and SEC31 make a 2:2 tetramer that forms the edge element of the COPII outer coat. The tetramer self-assembles in multiple copies to form the complete polyhedral cage. Interacts (via WD 8) with SEC13. Interacts with PDCD6; interaction takes place in response to cytosolic calcium increase and leads to bridge together the BCR(KLHL12) complex and SEC31A, leading to monoubiquitination. Interacts with KLHL12. In terms of processing, monoubiquitinated by the BCR(KLHL12) E3 ubiquitin ligase complex, leading to regulate the size of COPII coats. Ubiquitously expressed.

The protein localises to the cytoplasm. It is found in the cytoplasmic vesicle. Its subcellular location is the COPII-coated vesicle membrane. The protein resides in the endoplasmic reticulum membrane. In terms of biological role, component of the coat protein complex II (COPII) which promotes the formation of transport vesicles from the endoplasmic reticulum (ER). The coat has two main functions, the physical deformation of the endoplasmic reticulum membrane into vesicles and the selection of cargo molecules. The sequence is that of Protein transport protein Sec31A (Sec31a) from Rattus norvegicus (Rat).